Consider the following 261-residue polypeptide: Pantothenate synthetase (261 aa).

An ATP-binding site is contributed by 29-36 (MGALHNGH). H36 serves as the catalytic Proton donor. Q60 is a binding site for (R)-pantoate. Q60 is a binding site for beta-alanine. Residue 147 to 150 (GEKD) coordinates ATP. Q153 contributes to the (R)-pantoate binding site. 184–187 (LSSR) lines the ATP pocket.

The protein belongs to the pantothenate synthetase family. In terms of assembly, homodimer.

The protein resides in the cytoplasm. It carries out the reaction (R)-pantoate + beta-alanine + ATP = (R)-pantothenate + AMP + diphosphate + H(+). It functions in the pathway cofactor biosynthesis; (R)-pantothenate biosynthesis; (R)-pantothenate from (R)-pantoate and beta-alanine: step 1/1. Catalyzes the condensation of pantoate with beta-alanine in an ATP-dependent reaction via a pantoyl-adenylate intermediate. This chain is Pantothenate synthetase, found in Francisella tularensis subsp. mediasiatica (strain FSC147).